The sequence spans 852 residues: Patatin-like phospholipase domain-containing protein CaO19.1504 (852 aa).

Positions 41-52 (ATTDITTTPIND) are enriched in low complexity. The disordered stretch occupies residues 41–184 (ATTDITTTPI…KKTTPTSSTS (144 aa)). The segment covering 75–95 (INGTVSDSSSITDEDIMNSSY) has biased composition (polar residues). The span at 101-110 (SSTNLKSNST) shows a compositional bias: low complexity. Positions 113 to 122 (DDDDDDDDDD) are enriched in acidic residues. Low complexity-rich tracts occupy residues 129-142 (SGTT…SLSS) and 158-171 (GGSR…KGSS). Residues 207–227 (WPILIFVFSWIGILGIFYFMI) form a helical membrane-spanning segment. Positions 396-588 (LCLSGGACFA…RTDIPIEALN (193 aa)) constitute a PNPLA domain. Positions 427–431 (GTSGG) match the GXSXG motif. Catalysis depends on Ser429, which acts as the Nucleophile. The Proton acceptor role is filled by Asp575. The interval 800–840 (KKLLDELDNEDEEEDEEEEEVDVDDDDDDDDDSLSDSFEIT) is disordered. Over residues 805–833 (ELDNEDEEEDEEEEEVDVDDDDDDDDDSL) the composition is skewed to acidic residues.

The protein belongs to the PLPL family.

Its subcellular location is the membrane. Probable lipid hydrolase. The protein is Patatin-like phospholipase domain-containing protein CaO19.1504 of Candida albicans (strain SC5314 / ATCC MYA-2876) (Yeast).